Here is a 235-residue protein sequence, read N- to C-terminus: Mediator of RNA polymerase II transcription subunit 7 (235 aa).

Belongs to the Mediator complex subunit 7 family. As to quaternary structure, component of the Mediator complex.

It localises to the nucleus. In terms of biological role, component of the Mediator complex, a coactivator involved in the regulated transcription of nearly all RNA polymerase II-dependent genes. Mediator functions as a bridge to convey information from gene-specific regulatory proteins to the basal RNA polymerase II transcription machinery. Mediator is recruited to promoters by direct interactions with regulatory proteins and serves as a scaffold for the assembly of a functional preinitiation complex with RNA polymerase II and the general transcription factors. This Yarrowia lipolytica (strain CLIB 122 / E 150) (Yeast) protein is Mediator of RNA polymerase II transcription subunit 7 (MED7).